The following is a 420-amino-acid chain: MVDEQVAVEHGTVSHTISREEDGVVHERRVLASGERVEVFYKAPAPRPREGRASTFHDFTVPAAAAVPGPEPEPEPHPAMPIHANGGGETKTNTQDQNQNQTTRARTNAKAEERTAEMDDTMASSGGQRGAPISADLLSLSSLTGRMAAMAPSWMKSEVCGERMRFKEDVYDGEAETLAEPPRCFMLSFVFIYYCCYLAFLALLAFGFNPLFLPSFMPVGAKVLRGKGRDFGVPLSYGCPTNPFCKVYTLIPAVVINNVTYYPNNTDSLGGHGGFEAAALHVAALFESGCPNLQAVTNRNRTFNVTRASGRVERRLVQDMQRVLASAVVVMHHHCHYETYYVFDGVGPEFGTIPTPSFKDVLAFRPSLVTNCTAPLKTSVKGPNWSGAAGGMKRKQCRVDRLTDRSFPAYLEEVMYVMVQ.

Disordered regions lie at residues Met1–Glu21 and Ala64–Arg129. The Intravirion segment spans residues Met1–Cys184. The segment covering Thr92 to Asn108 has biased composition (low complexity). The helical; Signal-anchor for type II membrane protein transmembrane segment at Phe185 to Ala205 threads the bilayer. The Virion surface portion of the chain corresponds to Phe206–Gln420. Asn258, Asn264, Asn300, Asn304, Asn371, and Asn384 each carry an N-linked (GlcNAc...) asparagine; by host glycan.

The protein belongs to the herpesviridae BDLF2 family. Interacts with BMRF2.

It is found in the virion membrane. Its function is as follows. Rearranges cellular actin to increase intercellular contacts and thereby promote virus cell-to-cell spreading. Induce the outgrowth of long, branched plasma membrane fronds to create intercellular network for virion traffic. The fronds are actin based and RhoA-dependent. The protein is Protein BDLF2 of Epstein-Barr virus (strain GD1) (HHV-4).